A 121-amino-acid polypeptide reads, in one-letter code: Perlustrin-like protein (121 aa).

Residues 1 to 23 form the signal peptide; that stretch reads MKFGVGFLLSCLVALNTVQNMLA. Residues 24–104 enclose the IGFBP N-terminal domain; the sequence is LSCLPCDFDT…FDFKGTCQES (81 aa). 6 cysteine pairs are disulfide-bonded: Cys-26–Cys-52, Cys-29–Cys-54, Cys-36–Cys-55, Cys-45–Cys-58, Cys-66–Cys-79, and Cys-73–Cys-101. N-linked (GlcNAc...) asparagine glycans are attached at residues Asn-68, Asn-81, and Asn-117.

Component of the acid-insoluble organic matrix of calcified layers of the shell (at protein level).

It is found in the secreted. The chain is Perlustrin-like protein from Lottia gigantea (Giant owl limpet).